The chain runs to 421 residues: Trimethyllysine dioxygenase, mitochondrial (421 aa).

The N-terminal 15 residues, 1 to 15 (MWYHKLLHQQSRLQN), are a transit peptide targeting the mitochondrion. N6-acetyllysine occurs at positions 179 and 236. Fe cation is bound by residues His242, Asp244, and His389.

The protein belongs to the gamma-BBH/TMLD family. Homodimer. Requires Fe(2+) as cofactor. It depends on L-ascorbate as a cofactor.

It is found in the mitochondrion matrix. It carries out the reaction N(6),N(6),N(6)-trimethyl-L-lysine + 2-oxoglutarate + O2 = (3S)-3-hydroxy-N(6),N(6),N(6)-trimethyl-L-lysine + succinate + CO2. Its pathway is amine and polyamine biosynthesis; carnitine biosynthesis. In terms of biological role, converts trimethyllysine (TML) into hydroxytrimethyllysine (HTML). The protein is Trimethyllysine dioxygenase, mitochondrial (Tmlhe) of Rattus norvegicus (Rat).